A 410-amino-acid chain; its full sequence is Benzene 1,2-dioxygenase system ferredoxin--NAD(+) reductase subunit (410 aa).

Position 4–35 (His-4–Glu-35) interacts with FAD. Arg-145–Glu-173 contributes to the NAD(+) binding site.

Belongs to the bacterial ring-hydroxylating dioxygenase ferredoxin reductase family. As to quaternary structure, this dioxygenase system consists of four proteins: the two subunits of the hydroxylase component (BedC1 and BedC2), a ferredoxin (BedB) and a ferredoxin reductase (BedA). FAD serves as cofactor.

It catalyses the reaction 2 reduced [2Fe-2S]-[ferredoxin] + NAD(+) + H(+) = 2 oxidized [2Fe-2S]-[ferredoxin] + NADH. It functions in the pathway aromatic compound metabolism; benzene degradation; catechol from benzene: step 1/2. In terms of biological role, part of the electron transfer component of benzene 1,2-dioxygenase, transfers electrons from ferredoxin to NADH. This chain is Benzene 1,2-dioxygenase system ferredoxin--NAD(+) reductase subunit (bedA), found in Pseudomonas putida (Arthrobacter siderocapsulatus).